The primary structure comprises 333 residues: MNQTLIQEILEVVEQAAIASAKLTGLGQKDEADAAAVEAMRLRMGKIEMKGKIVIGEGERDEAPMLYIGEEVGSGNGPGVDFAVDPCEGTNLCANNQRGSMAVLAASDTGGLFNAPDFYMNKLAAPPAAKGKVDIRNSATENLKILSNCLDLAIDELTVVVMDRARHKGLIKEIRECGAKIQPISDGDVQAAIACGFAGTGTHCLMGIGAAPEGVISAAAMRALGGHFQGQLVYDPSIAQTSEWADYTKEGNIKRLNEMGITDIDKIYEANELASGENVIFAGSGITDGLLFDGVKFEKDCTRTSSLVISTLDSTCRFTNTIHMKDGAKSINL.

Mn(2+)-binding residues include Asp33, Glu57, Asp85, and Glu88. Substrate contacts are provided by residues 88–90 (EGT), Tyr119, 164–166 (RAR), and 186–188 (DGD). Glu213 provides a ligand contact to Mn(2+).

This sequence belongs to the FBPase class 2 family. In terms of assembly, homotetramer. Mn(2+) is required as a cofactor.

It carries out the reaction beta-D-fructose 1,6-bisphosphate + H2O = beta-D-fructose 6-phosphate + phosphate. The catalysed reaction is D-sedoheptulose 1,7-bisphosphate + H2O = D-sedoheptulose 7-phosphate + phosphate. Its pathway is carbohydrate biosynthesis; Calvin cycle. Catalyzes the hydrolysis of fructose 1,6-bisphosphate (Fru 1,6-P2) and sedoheptulose 1,7-bisphosphate (Sed 1,7-P2) to fructose 6-phosphate and sedoheptulose 7-phosphate, respectively. This chain is D-fructose 1,6-bisphosphatase class 2/sedoheptulose 1,7-bisphosphatase, found in Prochlorococcus marinus (strain MIT 9515).